The chain runs to 120 residues: UPF0231 protein KPK_4613 (120 aa).

Belongs to the UPF0231 family.

The protein is UPF0231 protein KPK_4613 of Klebsiella pneumoniae (strain 342).